The following is a 352-amino-acid chain: 7,8-didemethyl-8-hydroxy-5-deazariboflavin synthase (352 aa).

In terms of domain architecture, Radical SAM core spans 35–275; that stretch reads ITFSKNAFIP…EGISIQVPPN (241 aa). [4Fe-4S] cluster contacts are provided by Cys49, Cys53, and Cys56.

Belongs to the radical SAM superfamily. CofG family. Consists of two subunits, CofG and CofH. [4Fe-4S] cluster serves as cofactor.

The enzyme catalyses 5-amino-5-(4-hydroxybenzyl)-6-(D-ribitylimino)-5,6-dihydrouracil + S-adenosyl-L-methionine = 7,8-didemethyl-8-hydroxy-5-deazariboflavin + 5'-deoxyadenosine + L-methionine + NH4(+) + H(+). It functions in the pathway cofactor biosynthesis; coenzyme F0 biosynthesis. In terms of biological role, catalyzes the radical-mediated synthesis of 7,8-didemethyl-8-hydroxy-5-deazariboflavin from 5-amino-5-(4-hydroxybenzyl)-6-(D-ribitylimino)-5,6-dihydrouracil. The protein is 7,8-didemethyl-8-hydroxy-5-deazariboflavin synthase of Methanococcus maripaludis (strain C5 / ATCC BAA-1333).